We begin with the raw amino-acid sequence, 454 residues long: Mediator of RNA polymerase II transcription subunit 1 (454 aa).

Belongs to the Mediator complex subunit 1 family. In terms of assembly, component of the Mediator complex.

It localises to the nucleus. Its function is as follows. Component of the Mediator complex, a coactivator involved in the regulated transcription of nearly all RNA polymerase II-dependent genes. Mediator functions as a bridge to convey information from gene-specific regulatory proteins to the basal RNA polymerase II transcription machinery. Mediator is recruited to promoters by direct interactions with regulatory proteins and serves as a scaffold for the assembly of a functional preinitiation complex with RNA polymerase II and the general transcription factors. This is Mediator of RNA polymerase II transcription subunit 1 (med1) from Schizosaccharomyces pombe (strain 972 / ATCC 24843) (Fission yeast).